The chain runs to 455 residues: Ammonium transporter Rh type B (455 aa).

Over 1-10 (MARIPRHRRL) the chain is Cytoplasmic. The chain crosses the membrane as a helical span at residues 11–31 (VLPLLCLLFQGATSLLFAIFV). Residues 32 to 58 (RYNHETDAALWHWGNHSNVDNEFYFRY) lie on the Extracellular side of the membrane. The N-linked (GlcNAc...) asparagine glycan is linked to Asn46. Residues 59-79 (PSFQDVHVMVFVGFGFLMVFL) form a helical membrane-spanning segment. At 80–83 (QRYG) the chain is on the cytoplasmic side. Residues 84–104 (FSSVGFTFLVATFTLQWATLL) traverse the membrane as a helical segment. Topologically, residues 105–121 (QGFLHSFHGGHIHIGVE) are extracellular. The chain crosses the membrane as a helical span at residues 122-142 (SLINADFCAGAVLISFGAVLG). Residues 143 to 148 (KTGPAQ) lie on the Cytoplasmic side of the membrane. The helical transmembrane segment at 149-169 (LLLMALLEAVLFSVNEFILLS) threads the bilayer. Residues 170 to 176 (LLGVRDA) are Extracellular-facing. A helical membrane pass occupies residues 177 to 197 (GGSMTIHTFGAYFGLFLSRVL). Residues 198–216 (YRSQLEKSRHRQTSVYNSD) lie on the Cytoplasmic side of the membrane. The helical transmembrane segment at 217-237 (LFAMIGTIFLWVFWPSFNSAP) threads the bilayer. The Extracellular segment spans residues 238–247 (TALGDGQHRT). The chain crosses the membrane as a helical span at residues 248–270 (VVNTYYSLTASTLSTFALSALVS). Topologically, residues 271-274 (GDGR) are cytoplasmic. A helical membrane pass occupies residues 275 to 295 (LDMVHIQNAALAGGVVVGTAS). Residue Glu296 is a topological domain, extracellular. Residues 297-317 (MMLTPFGALAAGFLAGTVSTL) form a helical membrane-spanning segment. At 318-340 (GYKFFTPILESRFKLQDTCGVHN) the chain is on the cytoplasmic side. Residues 341–361 (LHGMPGLLGAILGVLVAALAT) traverse the membrane as a helical segment. The Extracellular portion of the chain corresponds to 362–390 (HEAYGDGLQTVFPLIAKGQRSATSQAMYQ). The helical transmembrane segment at 391 to 411 (LFGMFVTLVFASVGGSLGGLL) threads the bilayer. Residues 412–455 (LKLPFLDSPPDSQCFEDQVYWEVPGEQEAETQRPLRTEEPDTQA) lie on the Cytoplasmic side of the membrane. The interval 413–421 (KLPFLDSPP) is interaction with ANK3.

Belongs to the ammonium transporter (TC 2.A.49) family. Rh subfamily. As to quaternary structure, interacts (via C-terminus) with ANK2 and ANK3; required for targeting to the basolateral membrane. In terms of processing, N-glycosylated. Expressed in kidney by connecting segments and collecting tubules (at protein level).

Its subcellular location is the basolateral cell membrane. It is found in the cytoplasmic vesicle membrane. It catalyses the reaction NH4(+)(in) = NH4(+)(out). It carries out the reaction methylamine(out) = methylamine(in). The enzyme catalyses CO2(out) = CO2(in). Its function is as follows. Ammonium transporter involved in the maintenance of acid-base homeostasis. Transports ammonium and its related derivative methylammonium across the basolateral plasma membrane of epithelial cells likely contributing to renal transepithelial ammonia transport and ammonia metabolism. May transport either NH4(+) or NH3 ammonia species predominantly mediating an electrogenic NH4(+) transport. May act as a CO2 channel providing for renal acid secretion. The polypeptide is Ammonium transporter Rh type B (Rhbg) (Rattus norvegicus (Rat)).